The following is a 101-amino-acid chain: Small ribosomal subunit protein uS14 (101 aa).

Belongs to the universal ribosomal protein uS14 family. As to quaternary structure, part of the 30S ribosomal subunit. Contacts proteins S3 and S10.

In terms of biological role, binds 16S rRNA, required for the assembly of 30S particles and may also be responsible for determining the conformation of the 16S rRNA at the A site. In Alcanivorax borkumensis (strain ATCC 700651 / DSM 11573 / NCIMB 13689 / SK2), this protein is Small ribosomal subunit protein uS14.